We begin with the raw amino-acid sequence, 190 residues long: Cathelicidin-3 (190 aa).

An N-terminal signal peptide occupies residues 1 to 29 (METQMASPSLGRCSLWLLLLGLLLPSASA). Glutamine 30 carries the post-translational modification Pyrrolidone carboxylic acid. The propeptide occupies 30-130 (QALSYREAVL…DLNCNELQSV (101 aa)). 2 disulfides stabilise this stretch: cysteine 85-cysteine 96 and cysteine 107-cysteine 124. Basic residues predominate over residues 133–151 (LRPRRPRLPRPRPRPRPRP). The tract at residues 133-190 (LRPRRPRLPRPRPRPRPRPRSLPLPRPQPRRIPRPILLPWRPPRPIPRPQPQPIPRWL) is disordered. A compositionally biased stretch (pro residues) spans 172-190 (WRPPRPIPRPQPQPIPRWL).

The protein belongs to the cathelicidin family.

The protein localises to the secreted. Exerts, in vitro, a potent antimicrobial activity. Probably due to an impairment of the function of the respiratory chain and of energy-dependent activities in the inner membrane of susceptible microorganisms. The chain is Cathelicidin-3 (CATHL3) from Ovis aries (Sheep).